The primary structure comprises 123 residues: Large ribosomal subunit protein bL12 (123 aa).

It belongs to the bacterial ribosomal protein bL12 family. In terms of assembly, homodimer. Part of the ribosomal stalk of the 50S ribosomal subunit. Forms a multimeric L10(L12)X complex, where L10 forms an elongated spine to which 2 to 4 L12 dimers bind in a sequential fashion. Binds GTP-bound translation factors.

In terms of biological role, forms part of the ribosomal stalk which helps the ribosome interact with GTP-bound translation factors. Is thus essential for accurate translation. The sequence is that of Large ribosomal subunit protein bL12 from Clostridium kluyveri (strain NBRC 12016).